A 136-amino-acid chain; its full sequence is UPF0213 protein AHA_3736 (136 aa).

The region spanning 17–92 (SHWFIYMVRT…KQQSKAFKEQ (76 aa)) is the GIY-YIG domain. Residues 114–136 (QKRPRYAAAKEGSDNRECQRQVD) form a disordered region. Residues 124 to 136 (EGSDNRECQRQVD) show a composition bias toward basic and acidic residues.

The protein belongs to the UPF0213 family.

The protein is UPF0213 protein AHA_3736 of Aeromonas hydrophila subsp. hydrophila (strain ATCC 7966 / DSM 30187 / BCRC 13018 / CCUG 14551 / JCM 1027 / KCTC 2358 / NCIMB 9240 / NCTC 8049).